We begin with the raw amino-acid sequence, 495 residues long: uncharacterized protein (495 aa).

A TRAM domain is found at 16 to 74 (SSKRGDLIELAVTALDEDGNGIGTHDGTNVHVIGALPDERVRARLTHVGKRHLHAEAVE). The [4Fe-4S] cluster site is built by C88, C94, C97, and C175. Residues Q299, Y328, E349, and N397 each contribute to the S-adenosyl-L-methionine site. Catalysis depends on C424, which acts as the Nucleophile. Basic and acidic residues predominate over residues 472-483 (DRLESPAKERSR). Residues 472–495 (DRLESPAKERSRPRASHKAKGGAV) form a disordered region. The span at 484–495 (PRASHKAKGGAV) shows a compositional bias: basic residues.

It belongs to the class I-like SAM-binding methyltransferase superfamily. RNA M5U methyltransferase family.

This is an uncharacterized protein from Geobacter sulfurreducens (strain ATCC 51573 / DSM 12127 / PCA).